Consider the following 684-residue polypeptide: Acetyl-coenzyme A synthetase 2 (684 aa).

CoA is bound by residues 207–210 (RGGK) and threonine 326. Residues 402-404 (GEP), 426-431 (DTMWQT), aspartate 517, and arginine 532 each bind ATP. Serine 540 is a binding site for CoA. Arginine 543 is a binding site for ATP. Residue arginine 613 participates in CoA binding.

This sequence belongs to the ATP-dependent AMP-binding enzyme family.

It carries out the reaction acetate + ATP + CoA = acetyl-CoA + AMP + diphosphate. The chain is Acetyl-coenzyme A synthetase 2 (ACS2) from Kluyveromyces lactis (strain ATCC 8585 / CBS 2359 / DSM 70799 / NBRC 1267 / NRRL Y-1140 / WM37) (Yeast).